An 88-amino-acid polypeptide reads, in one-letter code: Small ribosomal subunit protein bS16c (88 aa).

It belongs to the bacterial ribosomal protein bS16 family.

It is found in the plastid. The protein localises to the chloroplast. The sequence is that of Small ribosomal subunit protein bS16c from Lactuca sativa (Garden lettuce).